The sequence spans 61 residues: Potassium channel toxin alpha-KTx 6.9 (61 aa).

The first 23 residues, 1–23, serve as a signal peptide directing secretion; the sequence is MNAKFILLLLVVTTTTLLPDAKG. 4 disulfides stabilise this stretch: Cys-29-Cys-50, Cys-35-Cys-55, Cys-39-Cys-57, and Cys-45-Cys-60.

Belongs to the short scorpion toxin superfamily. Potassium channel inhibitor family. Alpha-KTx 06 subfamily. In terms of tissue distribution, expressed by the venom gland.

The protein localises to the secreted. Inhibits Kv1.2/KCNA2 and Kv1.3/KCNA3 voltage-gated potassium channels. The protein is Potassium channel toxin alpha-KTx 6.9 of Opistophthalmus carinatus (African yellow leg scorpion).